The chain runs to 539 residues: CTP synthase (539 aa).

The interval 1–268 (MSFKSIFLTG…SDFLLNKLGF (268 aa)) is amidoligase domain. Residue Ser-14 participates in CTP binding. Ser-14 lines the UTP pocket. 15–20 (SLGKGL) contributes to the ATP binding site. Tyr-55 contributes to the L-glutamine binding site. Residue Asp-72 participates in ATP binding. Mg(2+)-binding residues include Asp-72 and Glu-142. Residues 149-151 (DIE), 188-193 (KTKPTQ), and Lys-224 contribute to the CTP site. UTP-binding positions include 188 to 193 (KTKPTQ) and Lys-224. The 239-residue stretch at 294–532 (RIGLVGKYLE…IRAAKAYSLE (239 aa)) folds into the Glutamine amidotransferase type-1 domain. Gly-353 lines the L-glutamine pocket. Residue Cys-380 is the Nucleophile; for glutamine hydrolysis of the active site. Residues 381 to 384 (LGMQ), Glu-404, and Arg-460 each bind L-glutamine. Active-site residues include His-505 and Glu-507.

The protein belongs to the CTP synthase family. Homotetramer.

The catalysed reaction is UTP + L-glutamine + ATP + H2O = CTP + L-glutamate + ADP + phosphate + 2 H(+). It carries out the reaction L-glutamine + H2O = L-glutamate + NH4(+). It catalyses the reaction UTP + NH4(+) + ATP = CTP + ADP + phosphate + 2 H(+). It functions in the pathway pyrimidine metabolism; CTP biosynthesis via de novo pathway; CTP from UDP: step 2/2. With respect to regulation, allosterically activated by GTP, when glutamine is the substrate; GTP has no effect on the reaction when ammonia is the substrate. The allosteric effector GTP functions by stabilizing the protein conformation that binds the tetrahedral intermediate(s) formed during glutamine hydrolysis. Inhibited by the product CTP, via allosteric rather than competitive inhibition. Its function is as follows. Catalyzes the ATP-dependent amination of UTP to CTP with either L-glutamine or ammonia as the source of nitrogen. Regulates intracellular CTP levels through interactions with the four ribonucleotide triphosphates. The chain is CTP synthase from Chlamydia trachomatis serovar L2 (strain ATCC VR-902B / DSM 19102 / 434/Bu).